The chain runs to 136 residues: Large ribosomal subunit protein eL27B (136 aa).

It belongs to the eukaryotic ribosomal protein eL27 family. As to quaternary structure, component of the large ribosomal subunit (LSU). Mature yeast ribosomes consist of a small (40S) and a large (60S) subunit. The 40S small subunit contains 1 molecule of ribosomal RNA (18S rRNA) and 33 different proteins (encoded by 57 genes). The large 60S subunit contains 3 rRNA molecules (25S, 5.8S and 5S rRNA) and 46 different proteins (encoded by 81 genes).

The protein localises to the cytoplasm. Component of the ribosome, a large ribonucleoprotein complex responsible for the synthesis of proteins in the cell. The small ribosomal subunit (SSU) binds messenger RNAs (mRNAs) and translates the encoded message by selecting cognate aminoacyl-transfer RNA (tRNA) molecules. The large subunit (LSU) contains the ribosomal catalytic site termed the peptidyl transferase center (PTC), which catalyzes the formation of peptide bonds, thereby polymerizing the amino acids delivered by tRNAs into a polypeptide chain. The nascent polypeptides leave the ribosome through a tunnel in the LSU and interact with protein factors that function in enzymatic processing, targeting, and the membrane insertion of nascent chains at the exit of the ribosomal tunnel. This is Large ribosomal subunit protein eL27B from Saccharomyces cerevisiae (strain ATCC 204508 / S288c) (Baker's yeast).